The following is a 258-amino-acid chain: UPF0246 protein YaaA (258 aa).

Belongs to the UPF0246 family.

The sequence is that of UPF0246 protein YaaA from Escherichia coli (strain 55989 / EAEC).